The chain runs to 33 residues: Photosystem II reaction center protein Psb30 (33 aa).

The chain crosses the membrane as a helical span at residues 5–25 (ILSQLIAIAVTLFLGPVVVIL).

The protein belongs to the Psb30/Ycf12 family. In terms of assembly, PSII is composed of 1 copy each of membrane proteins PsbA, PsbB, PsbC, PsbD, PsbE, PsbF, PsbH, PsbI, PsbJ, PsbK, PsbL, PsbM, PsbT, PsbX, PsbY, PsbZ, Psb30/Ycf12, peripheral proteins of the oxygen-evolving complex and a large number of cofactors. It forms dimeric complexes.

Its subcellular location is the plastid. The protein localises to the chloroplast thylakoid membrane. In terms of biological role, a core subunit of photosystem II (PSII), probably helps stabilize the reaction center. This chain is Photosystem II reaction center protein Psb30, found in Oedogonium cardiacum (Filamentous green alga).